The following is a 105-amino-acid chain: Integration host factor subunit beta (105 aa).

It belongs to the bacterial histone-like protein family. As to quaternary structure, heterodimer of an alpha and a beta chain.

This protein is one of the two subunits of integration host factor, a specific DNA-binding protein that functions in genetic recombination as well as in transcriptional and translational control. The protein is Integration host factor subunit beta of Nitrosomonas eutropha (strain DSM 101675 / C91 / Nm57).